The chain runs to 207 residues: Proteasome subunit beta 1 (207 aa).

Residues methionine 1–glycine 9 constitute a propeptide, removed in mature form; by autocatalysis. The active-site Nucleophile is threonine 10.

The protein belongs to the peptidase T1B family. In terms of assembly, the 20S proteasome core is composed of 14 alpha and 14 beta subunits that assemble into four stacked heptameric rings, resulting in a barrel-shaped structure. The two inner rings, each composed of seven catalytic beta subunits, are sandwiched by two outer rings, each composed of seven alpha subunits. The catalytic chamber with the active sites is on the inside of the barrel. Has a gated structure, the ends of the cylinder being occluded by the N-termini of the alpha-subunits. Is capped at one or both ends by the proteasome regulatory ATPase, PAN.

The protein localises to the cytoplasm. The catalysed reaction is Cleavage of peptide bonds with very broad specificity.. The formation of the proteasomal ATPase PAN-20S proteasome complex, via the docking of the C-termini of PAN into the intersubunit pockets in the alpha-rings, triggers opening of the gate for substrate entry. Interconversion between the open-gate and close-gate conformations leads to a dynamic regulation of the 20S proteasome proteolysis activity. In terms of biological role, component of the proteasome core, a large protease complex with broad specificity involved in protein degradation. This is Proteasome subunit beta 1 from Thermococcus sibiricus (strain DSM 12597 / MM 739).